The sequence spans 195 residues: Large ribosomal subunit protein uL11m (195 aa).

Belongs to the universal ribosomal protein uL11 family. Component of the mitochondrial ribosome large subunit (39S) which comprises a 16S rRNA and about 50 distinct proteins.

The protein localises to the mitochondrion. The chain is Large ribosomal subunit protein uL11m (mrpl-11) from Caenorhabditis elegans.